Consider the following 185-residue polypeptide: Transmembrane protein 140 (185 aa).

Residues 1 to 11 (MAGPRPRWRDQ) are Cytoplasmic-facing. The helical transmembrane segment at 12–32 (LLFMSIIVLVIVVICLMFYAL) threads the bilayer. Residues 33-77 (LWEAGNLTDLPNLRIGFYNFCLWNEDTSTLQCHQFPELEALGVPR) are Extracellular-facing. Residue Asn38 is glycosylated (N-linked (GlcNAc...) asparagine). Residues 78–98 (VGLGLARLGVYGSLVLTLFAP) traverse the membrane as a helical segment. Over 99 to 114 (QPLLLAQCNSDERAWR) the chain is Cytoplasmic. The helical transmembrane segment at 115–135 (LAVGFLAVSSVLLAGGLGLFL) threads the bilayer. Residues 136–150 (SYVWKWVRLSLPGPG) are Extracellular-facing. A helical membrane pass occupies residues 151-171 (FLALGSAQALLILLLIAMAVF). At 172-185 (PLRAERAESKLESC) the chain is on the cytoplasmic side.

As to expression, expression significantly higher in gliomas than in normal brain tissues.

It is found in the membrane. The protein is Transmembrane protein 140 (TMEM140) of Homo sapiens (Human).